The primary structure comprises 241 residues: Trypsin-1 (241 aa).

An N-terminal signal peptide occupies residues 1–13; the sequence is MKSLIFVLLLGAV. A propeptide spans 14 to 19 (activation peptide); that stretch reads FAEEDK. A Peptidase S1 domain is found at 20–239; sequence IVGGYECTKH…LSGWVRDTMA (220 aa). Disulfide bonds link C26/C155, C44/C60, C128/C228, C135/C201, C166/C180, and C191/C215. Active-site charge relay system residues include H59 and D103. The Charge relay system role is filled by S195.

Belongs to the peptidase S1 family.

The protein localises to the secreted. The protein resides in the extracellular space. It catalyses the reaction Preferential cleavage: Arg-|-Xaa, Lys-|-Xaa.. This Gadus morhua (Atlantic cod) protein is Trypsin-1.